Reading from the N-terminus, the 404-residue chain is Na(+)/H(+) antiporter NhaA 2 (404 aa).

Helical transmembrane passes span 24–44, 67–87, 103–123, 132–152, 161–181, 184–204, 216–236, 266–286, 303–323, 339–359, and 372–392; these read GIIL…SFSG, VLHW…GMEI, ILPI…YALF, GWGI…SLVA, VFLT…IAIF, SQIS…LILA, IILG…ATIA, TPWS…GIII, IIFG…FILI, LYGA…VSSL, and MCIM…FKFI.

It belongs to the NhaA Na(+)/H(+) (TC 2.A.33) antiporter family.

The protein resides in the cell membrane. It catalyses the reaction Na(+)(in) + 2 H(+)(out) = Na(+)(out) + 2 H(+)(in). Na(+)/H(+) antiporter that extrudes sodium in exchange for external protons. The chain is Na(+)/H(+) antiporter NhaA 2 from Clostridium beijerinckii (strain ATCC 51743 / NCIMB 8052) (Clostridium acetobutylicum).